Consider the following 84-residue polypeptide: Minor capsid protein P30 (84 aa).

In terms of assembly, dimer.

The protein localises to the virion. Minor capsid protein essential for stable capsid assembly of complete particles. This chain is Minor capsid protein P30 (XXX), found in Enterobacteria phage PRD1 (Bacteriophage PRD1).